The following is a 279-amino-acid chain: Protein COP1 SUPPRESSOR 2 (279 aa).

2 disordered regions span residues 1-29 (MPPK…ISEE) and 57-79 (SSTA…EGEK). Residues 68–79 (KPVEKTETEGEK) show a composition bias toward basic and acidic residues. Residues 86–183 (DTFAQETAVL…EETEAAKKLL (98 aa)) are a coiled coil. Basic and acidic residues predominate over residues 217 to 229 (LRREHPELYKDRG). A disordered region spans residues 217–279 (LRREHPELYK…KRERNRVMRR (63 aa)). Residues 250-260 (ADSGKSRQAAT) are compositionally biased toward polar residues. Over residues 270-279 (KRERNRVMRR) the composition is skewed to basic residues.

The protein belongs to the TLS1 family. As to quaternary structure, interacts with COP1.

Its subcellular location is the nucleus. The protein resides in the nucleus speckle. In terms of biological role, inhibits E3 ubiquitin-protein ligase activity of COP1, a central repressor of seedling photomorphogenesis. Represses COP1-mediated turnover of HY5 in the dark. Required for primary root development under normal light growth conditions. In Arabidopsis thaliana (Mouse-ear cress), this protein is Protein COP1 SUPPRESSOR 2.